We begin with the raw amino-acid sequence, 386 residues long: Phosphoglycerate kinase (386 aa).

Residues 21-23, Arg36, 59-62, Arg113, and Arg146 contribute to the substrate site; these read DLN and HLGR. Residues Lys197, Glu314, and 340-343 each bind ATP; that span reads GGDT.

This sequence belongs to the phosphoglycerate kinase family. As to quaternary structure, monomer.

Its subcellular location is the cytoplasm. The catalysed reaction is (2R)-3-phosphoglycerate + ATP = (2R)-3-phospho-glyceroyl phosphate + ADP. It participates in carbohydrate degradation; glycolysis; pyruvate from D-glyceraldehyde 3-phosphate: step 2/5. This chain is Phosphoglycerate kinase, found in Marinobacter nauticus (strain ATCC 700491 / DSM 11845 / VT8) (Marinobacter aquaeolei).